Here is a 204-residue protein sequence, read N- to C-terminus: Thymidine kinase (204 aa).

Residues 15–22 (GSMFSGKS) and 88–91 (DEVQ) each bind ATP. Residue Glu-89 is the Proton acceptor of the active site. The Zn(2+) site is built by Cys-145, Cys-148, Cys-183, and Cys-186.

It belongs to the thymidine kinase family. In terms of assembly, homotetramer.

Its subcellular location is the cytoplasm. It carries out the reaction thymidine + ATP = dTMP + ADP + H(+). The chain is Thymidine kinase from Halalkalibacterium halodurans (strain ATCC BAA-125 / DSM 18197 / FERM 7344 / JCM 9153 / C-125) (Bacillus halodurans).